The following is a 274-amino-acid chain: MAIVKCKPTSPGRRFVVKVVNQELHKGAPHAPLLEKKSKTGGRNNNGRITTRHIGGGHKQHYRLVDFRRNDKDGISATVERIEYDPNRTAHIALLLYADGERRYIIAPKGVSAGDQLIAGALAPIKPGNALQLRNIPVGSTVHGIELKPGKGAQIARSAGASAQLIAREGVYVTLRLRSGEMRKVLAECRATLGEVSNSEHSLRSLGKAGAKRWRGVRPTVRGVAMNPVDHPHGGGEGRTSGGRHPVSPWGFPTKGAKTRGNKRTDKMIVRRRK.

2 disordered regions span residues 28 to 54 and 224 to 274; these read APHA…TRHI and VAMN…RRRK. The segment covering 263 to 274 has biased composition (basic and acidic residues); that stretch reads KRTDKMIVRRRK.

Belongs to the universal ribosomal protein uL2 family. In terms of assembly, part of the 50S ribosomal subunit. Forms a bridge to the 30S subunit in the 70S ribosome.

Its function is as follows. One of the primary rRNA binding proteins. Required for association of the 30S and 50S subunits to form the 70S ribosome, for tRNA binding and peptide bond formation. It has been suggested to have peptidyltransferase activity; this is somewhat controversial. Makes several contacts with the 16S rRNA in the 70S ribosome. The sequence is that of Large ribosomal subunit protein uL2 from Pseudomonas fluorescens (strain SBW25).